The following is a 620-amino-acid chain: Dihydroxy-acid dehydratase (620 aa).

A Mg(2+)-binding site is contributed by aspartate 82. Residue cysteine 123 participates in [2Fe-2S] cluster binding. Residues aspartate 124 and lysine 125 each coordinate Mg(2+). Lysine 125 is modified (N6-carboxylysine). [2Fe-2S] cluster is bound at residue cysteine 197. A Mg(2+)-binding site is contributed by glutamate 493. The active-site Proton acceptor is serine 519.

The protein belongs to the IlvD/Edd family. As to quaternary structure, homodimer. The cofactor is [2Fe-2S] cluster. Mg(2+) serves as cofactor.

The enzyme catalyses (2R)-2,3-dihydroxy-3-methylbutanoate = 3-methyl-2-oxobutanoate + H2O. It carries out the reaction (2R,3R)-2,3-dihydroxy-3-methylpentanoate = (S)-3-methyl-2-oxopentanoate + H2O. The protein operates within amino-acid biosynthesis; L-isoleucine biosynthesis; L-isoleucine from 2-oxobutanoate: step 3/4. Its pathway is amino-acid biosynthesis; L-valine biosynthesis; L-valine from pyruvate: step 3/4. Functions in the biosynthesis of branched-chain amino acids. Catalyzes the dehydration of (2R,3R)-2,3-dihydroxy-3-methylpentanoate (2,3-dihydroxy-3-methylvalerate) into 2-oxo-3-methylpentanoate (2-oxo-3-methylvalerate) and of (2R)-2,3-dihydroxy-3-methylbutanoate (2,3-dihydroxyisovalerate) into 2-oxo-3-methylbutanoate (2-oxoisovalerate), the penultimate precursor to L-isoleucine and L-valine, respectively. In Bifidobacterium longum subsp. infantis (strain ATCC 15697 / DSM 20088 / JCM 1222 / NCTC 11817 / S12), this protein is Dihydroxy-acid dehydratase.